A 147-amino-acid chain; its full sequence is FAD synthase (147 aa).

Residues 13 to 14 (TF), 18 to 21 (HEGH), D100, and F127 each bind ATP.

It belongs to the archaeal FAD synthase family. In terms of assembly, homodimer. A divalent metal cation is required as a cofactor.

It carries out the reaction FMN + ATP + H(+) = FAD + diphosphate. It functions in the pathway cofactor biosynthesis; FAD biosynthesis; FAD from FMN: step 1/1. Catalyzes the transfer of the AMP portion of ATP to flavin mononucleotide (FMN) to produce flavin adenine dinucleotide (FAD) coenzyme. This is FAD synthase from Korarchaeum cryptofilum (strain OPF8).